The sequence spans 2326 residues: Probable voltage-dependent N-type calcium channel subunit alpha-1B (2326 aa).

Topologically, residues 1–83 (MARLGNDVPA…DNIIRKYAKR (83 aa)) are cytoplasmic. Positions 17–37 (AGGGRGANRHAGPQAGQRGMY) are disordered. An I repeat occupies 75 to 351 (NIIRKYAKRI…LVLGVLSGEF (277 aa)). The chain crosses the membrane as a helical span at residues 84 to 107 (ITEWPPFEYMILATIIANCIVLAL). Over 108-124 (EQHLPDGDKTPMSERLD) the chain is Extracellular. A helical transmembrane segment spans residues 125-145 (DTEPYFIGIFCFEAGIKIIAL). Over 146–156 (GFAFHKGSYLR) the chain is Cytoplasmic. Residues 157 to 175 (NGWNVMDFVVVLTGILTTI) traverse the membrane as a helical segment. Residues 176–180 (GTDFD) lie on the Extracellular side of the membrane. A helical membrane pass occupies residues 181–204 (LRTLRAVRVLRPLKLVSGIPSLQV). Topologically, residues 205-214 (VLKSIMKAMV) are cytoplasmic. Residues 215–237 (PLLQIGLLLFFAILMFAIIGLEF) traverse the membrane as a helical segment. Residues 238–323 (YMGKFHKTCF…TANDALGNTW (86 aa)) lie on the Extracellular side of the membrane. Asn-271 is a glycosylation site (N-linked (GlcNAc...) asparagine). A helical membrane pass occupies residues 324–348 (NWLYFIPLIVIGSFFMLNLVLGVLS). Topologically, residues 349 to 472 (GEFAKERERV…FFIRRMVKSQ (124 aa)) are cytoplasmic. The tract at residues 371-388 (QQVEQEFNRYLRWIHIAE) is binding to the beta subunit. One copy of the II repeat lies at 458-702 (EKRFRFFIRR…VFLAIAVDNL (245 aa)). The chain crosses the membrane as a helical span at residues 473–491 (SFYWIVLCLVGLNTLCVAI). The Extracellular portion of the chain corresponds to 492–501 (VHYDQPPLLT). A helical transmembrane segment spans residues 502-524 (DALYFAEFVFLGLFLTEMSLKMY). Over 525-534 (GLGPRNYFHS) the chain is Cytoplasmic. Ser-534 is a binding site for a 1,2-diacyl-sn-glycero-3-phospho-(1D-myo-inositol-4,5-bisphosphate). The helical transmembrane segment at 535 to 556 (SFNCFDFGVIVGSIFEVVWTAV) threads the bilayer. Over 557–563 (KPDTSFG) the chain is Extracellular. A helical membrane pass occupies residues 564–576 (ISVLRALRLLRIF). 2 residues coordinate a 1,2-diacyl-sn-glycero-3-phospho-(1D-myo-inositol-4,5-bisphosphate): Arg-574 and Lys-577. The Cytoplasmic portion of the chain corresponds to 577 to 594 (KVTKYWNSLRNLVVSLLN). The helical transmembrane segment at 595 to 620 (SMKSIISLLFLLFLFIVVFALLGMQL) threads the bilayer. The Extracellular portion of the chain corresponds to 621-672 (FGGQFNFEDGTPPTNFDTFPAAILTVFQILTGEDWNEVMYYGIEAHGGVKKG). A helical transmembrane segment spans residues 673 to 699 (MFSSVYFIILTLFGNYTLLNVFLAIAV). Over 700-1148 (DNLANAQELT…ACHYIVNLRY (449 aa)) the chain is Cytoplasmic. The interval 793–1048 (SHQIRPDMKT…LQHLPQQPED (256 aa)) is disordered. Composition is skewed to basic and acidic residues over residues 796 to 808 (IRPD…DRPL), 854 to 879 (KLGE…DDKR), 886 to 908 (SKET…SHEG), 935 to 979 (HGTE…EGAE), and 994 to 1011 (SEEK…VLRE). Over residues 1020-1032 (TQPSQDSGTQGNV) the composition is skewed to polar residues. One copy of the III repeat lies at 1134-1416 (NPVRRACHYI…IFVALIIITF (283 aa)). The helical transmembrane segment at 1149–1167 (FEMCILLVITMSSIALAAE) threads the bilayer. The Extracellular portion of the chain corresponds to 1168–1175 (DPVQGDAP). The helical transmembrane segment at 1176–1200 (RNNVLKYLDYVFTGVFTFEMVIKMI) threads the bilayer. Residues 1201–1214 (NLGLILHPGSYFRD) lie on the Cytoplasmic side of the membrane. Residues 1215–1235 (LWNILDFIVVSGALVAFAFTG) traverse the membrane as a helical segment. The Extracellular segment spans residues 1236–1241 (SRGKDL). A helical transmembrane segment spans residues 1242–1262 (NTIKSLRVLRVLRPLKTIKRL). At 1263–1280 (PKLKAVFDCVVNSLKNVL) the chain is on the cytoplasmic side. Residues 1281–1300 (NILIVYMLFMFIFAVIAVQL) traverse the membrane as a helical segment. Residues 1301-1387 (FKGKFFYCTD…DQGPSPSYRM (87 aa)) are Extracellular-facing. The helical transmembrane segment at 1388–1413 (EMSIFYVVYFVVFPFFFVNIFVALII) threads the bilayer. The Cytoplasmic portion of the chain corresponds to 1414–1468 (ITFQEQGDKVMSDCSLEKNERACIDFAISAKPLTRYMPQNKQTFQYKMWKFVVSP). The IV repeat unit spans residues 1453-1708 (NKQTFQYKMW…LFVAVIMDNF (256 aa)). Residues 1469 to 1487 (PFEYLIMALIALNTIVLMM) traverse the membrane as a helical segment. The Extracellular portion of the chain corresponds to 1488 to 1495 (KFYNAPDP). The helical transmembrane segment at 1496–1520 (YDRMLQYLNILFTFLFSMECVLKLI) threads the bilayer. At 1521–1530 (GFGVLNYFRD) the chain is on the cytoplasmic side. A helical membrane pass occupies residues 1531-1552 (AWNVFDFVTVLGSITDILVTEL). At 1553–1558 (ADSFIN) the chain is on the extracellular side. N-linked (GlcNAc...) asparagine glycosylation occurs at Asn-1558. Residues 1559-1577 (LSFLRLFRAARLIKLLRQG) traverse the membrane as a helical segment. Over 1578 to 1596 (YTIRILLWTFVQSFKALPY) the chain is Cytoplasmic. A helical transmembrane segment spans residues 1597–1616 (VCLLIAMLFFIYAIIGMQVF). Residues 1617–1680 (GNIELDDDGA…IDGDECGSNF (64 aa)) lie on the Extracellular side of the membrane. A helical transmembrane segment spans residues 1681 to 1704 (AYFYFVSFIFFSSFLMLNLFVAVI). Over 1705 to 2326 (MDNFEYLTRD…YRETDEDDWC (622 aa)) the chain is Cytoplasmic. One can recognise an EF-hand domain in the interval 1721 to 1756 (HHLDEFIRVWAEYDPGARGRITYNDMYEMLRHMCPP). The Ca(2+) site is built by Asp-1734, Arg-1740, and Asp-1745. The segment covering 1897–1912 (EEPSSYSTSHKNSVNP) has biased composition (polar residues). Disordered stretches follow at residues 1897-1916 (EEPS…LYQG), 1932-1954 (CAEG…KSSS), 2039-2242 (PHHH…SSDP), and 2271-2326 (TTAT…DDWC). Residues 1932-1948 (CAEGKKEVPESHPEEAG) show a composition bias toward basic and acidic residues. The span at 2039 to 2055 (PHHHHHHHRCHHRREKK) shows a compositional bias: basic residues. 2 stretches are compositionally biased toward basic and acidic residues: residues 2056–2069 (QRSL…HADE) and 2077–2104 (QLRD…EKQR). 3 stretches are compositionally biased toward polar residues: residues 2142–2161 (GSGS…STPS), 2275–2289 (GRSP…QPPQ), and 2302–2311 (GRSTGPSTAA).

The protein belongs to the calcium channel alpha-1 subunit (TC 1.A.1.11) family. Multisubunit complex consisting of alpha-1, alpha-2, beta and delta subunits in a 1:1:1:1 ratio. The channel activity is directed by the pore-forming and voltage-sensitive alpha-1 subunit. In many cases, this subunit is sufficient to generate voltage-sensitive calcium channel activity. The auxiliary subunits beta and alpha-2/delta linked by a disulfide bridge regulate the channel activity. Phosphorylated in vitro by CaM-kinase II, PKA, PKC and CGPK. Expression is higher in the electric lobe than in the forebrain.

The protein localises to the membrane. The isoform alpha-1B gives rise to N-type calcium currents. N-type calcium channels belong to the 'high-voltage activated' (HVA) group. This chain is Probable voltage-dependent N-type calcium channel subunit alpha-1B, found in Diplobatis ommata (Ocellated electric ray).